The primary structure comprises 419 residues: Hydrolase LUC6 (419 aa).

Ser238 is a catalytic residue.

The protein belongs to the AB hydrolase superfamily. FUS2 hydrolase family.

It functions in the pathway mycotoxin biosynthesis. Functionally, hydrolase; part of the gene cluster that mediates the biosynthesis of the mycotoxin lucilactaene and the lucilactaene-related compound NG-391 that act as cell cycle inhibitors with potent growth inhibitory activity against malarial parasites, moderate growth inhibitory activity against cancer cells, and no activity against bacteria and fungi. Within the pathway, LUC6 may catalyze the 2-pyrrolidone ring formation to form prelucilactaene C from prelucilactaene B, followed by C-15 hydroxylation by the same enzyme to give prelucilactaene D, epoxydation to yield prelucilactaene E, and finally cyclization to yield prelucilactaene F. The pathway begins with the hybrid PKS-NRPS synthetase LUC5 which is responsible for the condensation of one acetyl-coenzyme A (CoA) unit with six malonyl-CoA units and the amide linkage of the arising heptaketide and homoserine, subsequently releasing the first intermediate prelucilactaene B. Both the cytochrome P450 monooxygenase LUC2 and the hydrolase LUC6 function in parallel in modification of prelucilactaene B. LUC6 may catalyze the 2-pyrrolidone ring formation to form prelucilactaene C from prelucilactaene B, followed by C-15 hydroxylation by the same enzyme to give prelucilactaene D, which is then converted to prelucilactaene E by epoxidation, and finally to prelucilactaene F by cyclization. Prelucilactane D, prelucilactaene E, and prelucilactaene F can be converted to dihydrolucilactaene, NG391, and lucilactaene, respectively, via C-20 methyl group hydroxylation by the cytochrome P450 monooxygenase LUC2. However, LUC2, unlike FUS8 in fusarin C biosynthesis, is not enough for the full oxidation of the C-20 methyl group into carboxylic acid, which is a prerequisite for the final methylation step. The aldehyde dehydrogenase LUC3 is involved in the biosynthesis by further oxidation of the C-20 alcoholic analog prelucilactaene G into a carboxylic derivative. This unidentified carboxylic derivative may be converted to demethyllucilactaene. As the last step, the methyltransferase LUC1 methylates the hydroxyl group at C-21 of demethyllucilactaene to generate lucilactaene. The protein is Hydrolase LUC6 of Fusarium sp.